The primary structure comprises 201 residues: Protease (201 aa).

Residues His55, Asp72, and Cys122 contribute to the active site.

This sequence belongs to the peptidase C5 family. Interacts with protease cofactor pVI-C; this interaction is necessary for protease activation.

It is found in the virion. Its subcellular location is the host nucleus. The enzyme catalyses Cleaves proteins of the adenovirus and its host cell at two consensus sites: -Yaa-Xaa-Gly-Gly-|-Xaa- and -Yaa-Xaa-Gly-Xaa-|-Gly- (in which Yaa is Met, Ile or Leu, and Xaa is any amino acid).. With respect to regulation, requires DNA and protease cofactor for maximal activation. Inside nascent virions, becomes partially activated by binding to the viral DNA, allowing it to cleave the cofactor that binds to the protease and fully activates it. Actin, like the viral protease cofactor, seems to act as a cofactor in the cleavage of cytokeratin 18 and of actin itself. In terms of biological role, cleaves viral precursor proteins (pTP, pIIIa, pVI, pVII, pVIII, and pX) inside newly assembled particles giving rise to mature virions. Protease complexed to its cofactor slides along the viral DNA to specifically locate and cleave the viral precursors. Mature virions have a weakened organization compared to the unmature virions, thereby facilitating subsequent uncoating. Without maturation, the particle lacks infectivity and is unable to uncoat. Late in adenovirus infection, in the cytoplasm, may participate in the cytoskeleton destruction. Cleaves host cell cytoskeletal keratins K7 and K18. This Bovine adenovirus 4 (BAdV-4) protein is Protease.